The following is a 323-amino-acid chain: Glyoxylate/hydroxypyruvate reductase B (323 aa).

Residues Arg237 and Glu266 contribute to the active site. His285 acts as the Proton donor in catalysis.

The protein belongs to the D-isomer specific 2-hydroxyacid dehydrogenase family. GhrB subfamily. Homodimer.

It localises to the cytoplasm. It carries out the reaction glycolate + NADP(+) = glyoxylate + NADPH + H(+). The enzyme catalyses (R)-glycerate + NAD(+) = 3-hydroxypyruvate + NADH + H(+). The catalysed reaction is (R)-glycerate + NADP(+) = 3-hydroxypyruvate + NADPH + H(+). Functionally, catalyzes the NADPH-dependent reduction of glyoxylate and hydroxypyruvate into glycolate and glycerate, respectively. This chain is Glyoxylate/hydroxypyruvate reductase B, found in Klebsiella pneumoniae subsp. pneumoniae (strain ATCC 700721 / MGH 78578).